Here is a 102-residue protein sequence, read N- to C-terminus: Protamine-2 (102 aa).

The interval 1–102 (MVRCRVRSPS…RTRRRTCRRH (102 aa)) is disordered. Serine 8, serine 10, and serine 37 each carry phosphoserine. Residues 8–17 (SPSERSHEVY) are compositionally biased toward basic and acidic residues. Residues 39–48 (EHVEVYERTH) are compositionally biased toward basic and acidic residues. Residues 49 to 102 (GHSHYRRRHCSRRRLRRIHRQQHRSCRRRKRRSCRHRRRHRKGCRTRRRTCRRH) show a composition bias toward basic residues.

Belongs to the protamine P2 family. In terms of assembly, interacts with TDRP. Proteolytic processing into mature chains is required for histone eviction during spermatogenesis. Transition proteins (TNP1 and TNP2) are required for processing. In terms of tissue distribution, testis.

The protein resides in the nucleus. It localises to the chromosome. In terms of biological role, protamines substitute for histones in the chromatin of sperm during the haploid phase of spermatogenesis. They compact sperm DNA into a highly condensed, stable and inactive complex. This is Protamine-2 (PRM2) from Gorilla gorilla gorilla (Western lowland gorilla).